Here is a 355-residue protein sequence, read N- to C-terminus: Sesquiterpene synthase MAJ_08936 (355 aa).

Positions 91 and 96 each coordinate Mg(2+). The DDXXXD motif signature appears at 91 to 96; sequence DDLFVD. Arg-184 is a substrate binding site. Asn-230, Ser-234, and Glu-238 together coordinate Mg(2+).

Belongs to the terpene synthase family. Mg(2+) is required as a cofactor.

It carries out the reaction (2E,6E)-farnesyl diphosphate + H2O = (+)-corvol ether B + diphosphate. It catalyses the reaction (2E,6E)-farnesyl diphosphate + H2O = (+)-corvol ether A + diphosphate. Functionally, terpene synthase that catalyzes the conversion of (2E,6E)-farnesyl diphosphate (FPP) into sesquiterpenes which are important for fungi-environment interactions. Produces a mixture consisting of 8 sesquiterpenes including corvol ethers A and B, as well as traces of epizonarene, gamma-cadinene, delta-cadinene, alpha-cadinene, alpha-cadinol, and an unidentified sesquiterpene. The major product is corvol ether A. This chain is Sesquiterpene synthase MAJ_08936, found in Metarhizium majus (strain ARSEF 297).